The following is a 529-amino-acid chain: N5-hydroxyornithine acetylase sidL (529 aa).

Disordered stretches follow at residues Ala59–Phe95 and Ser239–Ala258. Residue His462 coordinates substrate. Glu498 functions as the Proton acceptor in the catalytic mechanism.

Belongs to the lysine N-acyltransferase mbtK family.

It localises to the cytoplasm. Its subcellular location is the cytosol. It functions in the pathway siderophore biosynthesis. Acyltransferase; part of the gene cluster that mediates the biosynthesis of at least 11 siderophores, including beauverichelin A, dimerumic acid (DA), Na-dimethyl coprogen (NADC), eleutherazine B, ferricrocin (FC), fusarinine A, fusarinine C (FsC), metachelin A, mevalonolactone, rhodotorulic acid (RA) and tenellin. This cocktail of siderophores for iron metabolism is essential for virulence, and more specifically for the fungal virulence in penetrating through the host cuticle. Siderophore synthesis is also involved in conidial germination under iron-deficient conditions. SIDL contributes to partial production of ferricrocin under iron-limiting conditions via the acetylation of N(5)-hydroxyornithine. The protein is N5-hydroxyornithine acetylase sidL of Beauveria bassiana (strain ARSEF 2860) (White muscardine disease fungus).